The following is a 333-amino-acid chain: Small ribosomal subunit protein uS2 (333 aa).

This sequence belongs to the universal ribosomal protein uS2 family.

In Azorhizobium caulinodans (strain ATCC 43989 / DSM 5975 / JCM 20966 / LMG 6465 / NBRC 14845 / NCIMB 13405 / ORS 571), this protein is Small ribosomal subunit protein uS2.